Reading from the N-terminus, the 464-residue chain is ATP synthase subunit beta (464 aa).

Position 152-159 (glycine 152–threonine 159) interacts with ATP.

The protein belongs to the ATPase alpha/beta chains family. In terms of assembly, F-type ATPases have 2 components, CF(1) - the catalytic core - and CF(0) - the membrane proton channel. CF(1) has five subunits: alpha(3), beta(3), gamma(1), delta(1), epsilon(1). CF(0) has three main subunits: a(1), b(2) and c(9-12). The alpha and beta chains form an alternating ring which encloses part of the gamma chain. CF(1) is attached to CF(0) by a central stalk formed by the gamma and epsilon chains, while a peripheral stalk is formed by the delta and b chains.

It is found in the cell membrane. It catalyses the reaction ATP + H2O + 4 H(+)(in) = ADP + phosphate + 5 H(+)(out). Functionally, produces ATP from ADP in the presence of a proton gradient across the membrane. The catalytic sites are hosted primarily by the beta subunits. This is ATP synthase subunit beta from Ureaplasma urealyticum serovar 10 (strain ATCC 33699 / Western).